Here is a 542-residue protein sequence, read N- to C-terminus: Calcium/calmodulin-dependent protein kinase type II subunit beta (542 aa).

The 259-residue stretch at 14 to 272 (YQLYEDIGKG…AHEALKHPWV (259 aa)) folds into the Protein kinase domain. Y17 is subject to Phosphotyrosine. ATP is bound by residues 20–28 (IGKGAFSVV) and K43. D136 (proton acceptor) is an active-site residue. The autoinhibitory domain stretch occupies residues 283–292 (HRQETVECLK). T287 carries the post-translational modification Phosphothreonine; by autocatalysis. The interval 291-301 (LKKFNARRKLK) is calmodulin-binding. Residues T306 and T307 each carry the phosphothreonine; by autocatalysis modification. The disordered stretch occupies residues 349–376 (ADGVKPQTNSTKNSSAITSPKGSLPPAA). Over residues 354 to 369 (PQTNSTKNSSAITSPK) the composition is skewed to polar residues. Phosphoserine occurs at positions 367, 371, 394, and 397. Phosphothreonine occurs at positions 400 and 401.

It belongs to the protein kinase superfamily. CAMK Ser/Thr protein kinase family. CaMK subfamily. In terms of assembly, CAMK2 is composed of 4 different chains: alpha (CAMK2A), beta (CAMK2B), gamma (CAMK2G), and delta (CAMK2D). The different isoforms assemble into homo- or heteromultimeric holoenzymes composed of 12 subunits with two hexameric rings stacked one on top of the other. Interacts with SYNGAP1, CAMK2N2 and MPDZ. Interacts with FOXO3. Interacts (when in a kinase inactive state not associated with calmodulin) with ARC; leading to target ARC to inactive synapses. Interacts with CAMK2N1; this interaction requires CAMK2B activation by Ca(2+). In terms of processing, autophosphorylation of Thr-287 following activation by Ca(2+)/calmodulin. Phosphorylation of Thr-287 locks the kinase into an activated state.

Its subcellular location is the cytoplasm. The protein localises to the cytoskeleton. It localises to the microtubule organizing center. The protein resides in the centrosome. It is found in the sarcoplasmic reticulum membrane. Its subcellular location is the synapse. It carries out the reaction L-seryl-[protein] + ATP = O-phospho-L-seryl-[protein] + ADP + H(+). The enzyme catalyses L-threonyl-[protein] + ATP = O-phospho-L-threonyl-[protein] + ADP + H(+). Activated by Ca(2+)/calmodulin. Binding of calmodulin results in conformational change that relieves intrasteric autoinhibition and allows autophosphorylation of Thr-287 which turns the kinase in a constitutively active form and confers to the kinase a Ca(2+)-independent activity. Functionally, calcium/calmodulin-dependent protein kinase that functions autonomously after Ca(2+)/calmodulin-binding and autophosphorylation, and is involved in dendritic spine and synapse formation, neuronal plasticity and regulation of sarcoplasmic reticulum Ca(2+) transport in skeletal muscle. In neurons, plays an essential structural role in the reorganization of the actin cytoskeleton during plasticity by binding and bundling actin filaments in a kinase-independent manner. This structural function is required for correct targeting of CaMK2A, which acts downstream of NMDAR to promote dendritic spine and synapse formation and maintain synaptic plasticity which enables long-term potentiation (LTP) and hippocampus-dependent learning. In developing hippocampal neurons, promotes arborization of the dendritic tree and in mature neurons, promotes dendritic remodeling. Also regulates the migration of developing neurons. Participates in the modulation of skeletal muscle function in response to exercise. In slow-twitch muscles, is involved in regulation of sarcoplasmic reticulum (SR) Ca(2+) transport and in fast-twitch muscle participates in the control of Ca(2+) release from the SR through phosphorylation of triadin, a ryanodine receptor-coupling factor, and phospholamban (PLN/PLB), an endogenous inhibitor of SERCA2A/ATP2A2. In response to interferon-gamma (IFN-gamma) stimulation, catalyzes phosphorylation of STAT1, stimulating the JAK-STAT signaling pathway. Phosphorylates reticulophagy regulator RETREG1 at 'Thr-134' under endoplasmic reticulum stress conditions which enhances RETREG1 oligomerization and its membrane scission and reticulophagy activity. The sequence is that of Calcium/calmodulin-dependent protein kinase type II subunit beta (Camk2b) from Mus musculus (Mouse).